The following is a 726-amino-acid chain: Catalase-peroxidase (726 aa).

The N-terminal stretch at 1–16 is a signal peptide; it reads MDNPTDSAGKCPVAHG. The tract at residues 1–26 is disordered; that stretch reads MDNPTDSAGKCPVAHGNTPRSRSNRD. Residues 96–218 constitute a cross-link (tryptophyl-tyrosyl-methioninium (Trp-Tyr) (with M-244)); the sequence is WHSAGTYRIT…LGAVQMGLIY (123 aa). The Proton acceptor role is filled by H97. Residues 218 to 244 constitute a cross-link (tryptophyl-tyrosyl-methioninium (Tyr-Met) (with W-96)); it reads YVNPEGPNGTPDPLASARDIRETFARM. H259 serves as a coordination point for heme b.

The protein belongs to the peroxidase family. Peroxidase/catalase subfamily. As to quaternary structure, homodimer or homotetramer. Requires heme b as cofactor. Post-translationally, formation of the three residue Trp-Tyr-Met cross-link is important for the catalase, but not the peroxidase activity of the enzyme.

It catalyses the reaction H2O2 + AH2 = A + 2 H2O. The enzyme catalyses 2 H2O2 = O2 + 2 H2O. Bifunctional enzyme with both catalase and broad-spectrum peroxidase activity. This chain is Catalase-peroxidase, found in Rhizobium johnstonii (strain DSM 114642 / LMG 32736 / 3841) (Rhizobium leguminosarum bv. viciae).